The chain runs to 837 residues: MKTKNFPLNKIAFACTLLLANPVAWAEDQFDASLWGGGSVLGIDFARFNVKNAVLPGRYEAQIYVNNEEKGESDIIFADNPATGRAELCFTPKLQEMLDLMDEAIVKSPNAEDDTCVFASEAIPKGTFDYQGGDMKLKLELPQALTIRRPRGYIAPSRWQTGTNAASANYDINYYRSGNPEVKSKSLYVGLRGGVNLGNWALRHNGSFSRFENHSSSGFTDKGKNHYERGDTYLQRDFALLRGNVTVGDFFSTARIGESFGLRGLRIASDDRMLAPSQRGFAPVVRGVANTNAKVSIKQNGYTIYQITVPAGPFVINDLYASGYSGDLTVEIQESDGKVRSFIVPFSNLAPLMRVGHLRYQLAGGRYRIDSRTFDERVLQGVLQYGLTNHLTLNSSLLYTRHYRAGLFGFGLNTPIGAFSADATWSHAEFPLKKVSKNGYSLHGSYSINFNEIGTNLTLAAYRYSSRDFYTLSDTIGLNRTFKQFSGAYLPEIYRPKNQFQVSLSQSLGNWGNLYLSGQTYNYWEKRGTNTQYQLAYANRFHILNYSINLSQSIDKETGKRDNSIYLSLSLPLGDNHSADSSYSRSGNDINQRLGVNGSFGERHQWSYGINASRNNQGYRSYDANLAHNNSIGSYRASYSRDSLKNRSTSLGASGAVVAHKYGITLSQPVGESFAIIHAKDAAGAKVESGANVSLDYFGNAVVPYTSPYEINYIGINPSDAEANVEFEATERQIIPRANSISLVDFRTGKNTMVLFNLTLPNGEPVPMASTAQDSEGAFVGDVVQGGVLFANKLTQPKGELIVKWGERESEQCRFHYQVDLDNAQIQNHDIQCKTAE.

The signal sequence occupies residues 1–26 (MKTKNFPLNKIAFACTLLLANPVAWA). Cys-813 and Cys-833 are disulfide-bonded.

Belongs to the fimbrial export usher family.

Its subcellular location is the cell outer membrane. Functionally, essential for piliation. The chain is Outer membrane usher protein HifC (hifC) from Haemophilus influenzae.